The primary structure comprises 429 residues: Xaa-Pro dipeptidase (429 aa).

D241, D252, H334, E372, and E411 together coordinate Mn(2+).

This sequence belongs to the peptidase M24B family. Bacterial-type prolidase subfamily. Requires Mn(2+) as cofactor.

The catalysed reaction is Xaa-L-Pro dipeptide + H2O = an L-alpha-amino acid + L-proline. Its function is as follows. Splits dipeptides with a prolyl residue in the C-terminal position. The chain is Xaa-Pro dipeptidase from Marinobacter nauticus (strain ATCC 700491 / DSM 11845 / VT8) (Marinobacter aquaeolei).